A 440-amino-acid polypeptide reads, in one-letter code: Adenylyltransferase and sulfurtransferase UBA4 (440 aa).

Position 1 is an N-acetylmethionine (methionine 1). Residues glycine 77, aspartate 98, 105-109 (SNLHR), lysine 122, and 166-167 (DS) each bind ATP. Zn(2+) is bound by residues cysteine 208 and cysteine 211. The Glycyl thioester intermediate; for adenylyltransferase activity role is filled by cysteine 225. Cysteine 286 and cysteine 289 together coordinate Zn(2+). Serine 326 is modified (phosphoserine). The Rhodanese domain maps to 339–438 (FLAKHIFLDV…YIDDIDQTIP (100 aa)). Residue cysteine 397 is the Cysteine persulfide intermediate; for sulfurtransferase activity of the active site.

This sequence in the N-terminal section; belongs to the HesA/MoeB/ThiF family. UBA4 subfamily. It depends on Zn(2+) as a cofactor.

The protein localises to the cytoplasm. It is found in the cytosol. It participates in tRNA modification; 5-methoxycarbonylmethyl-2-thiouridine-tRNA biosynthesis. Functionally, plays a central role in 2-thiolation of mcm(5)S(2)U at tRNA wobble positions of cytosolic tRNA(Lys), tRNA(Glu) and tRNA(Gln). Acts by mediating the C-terminal thiocarboxylation of sulfur carrier URM1. Its N-terminus first activates URM1 as acyl-adenylate (-COAMP), then the persulfide sulfur on the catalytic cysteine is transferred to URM1 to form thiocarboxylation (-COSH) of its C-terminus. The reaction probably involves hydrogen sulfide that is generated from the persulfide intermediate and that acts as a nucleophile towards URM1. Subsequently, a transient disulfide bond is formed. Does not use thiosulfate as sulfur donor; NFS1 probably acting as a sulfur donor for thiocarboxylation reactions. Prior mcm(5) tRNA modification by the elongator complex is required for 2-thiolation. May also be involved in protein urmylation. The polypeptide is Adenylyltransferase and sulfurtransferase UBA4 (Saccharomyces cerevisiae (strain YJM789) (Baker's yeast)).